A 359-amino-acid chain; its full sequence is Quinolinate synthase (359 aa).

Iminosuccinate-binding residues include histidine 81 and serine 99. Residue cysteine 144 participates in [4Fe-4S] cluster binding. Iminosuccinate is bound by residues 170–172 (YVN) and serine 187. Cysteine 229 is a [4Fe-4S] cluster binding site. Iminosuccinate-binding positions include 255-257 (HPE) and threonine 272. Position 315 (cysteine 315) interacts with [4Fe-4S] cluster.

It belongs to the quinolinate synthase family. Type 2 subfamily. [4Fe-4S] cluster is required as a cofactor.

It localises to the cytoplasm. It carries out the reaction iminosuccinate + dihydroxyacetone phosphate = quinolinate + phosphate + 2 H2O + H(+). It participates in cofactor biosynthesis; NAD(+) biosynthesis; quinolinate from iminoaspartate: step 1/1. Functionally, catalyzes the condensation of iminoaspartate with dihydroxyacetone phosphate to form quinolinate. This is Quinolinate synthase from Sinorhizobium medicae (strain WSM419) (Ensifer medicae).